Consider the following 604-residue polypeptide: Sulfite reductase [NADPH] flavoprotein alpha-component (604 aa).

The Flavodoxin-like domain maps to 65–203 (VTILYGSQTG…AAGQWHADVL (139 aa)). FMN-binding positions include 71 to 76 (SQTGNG), 118 to 121 (STHG), and 154 to 163 (LGDSSYEFFC). Residues 236-453 (QNPYSAEVLV…VEPNKHFRLP (218 aa)) form the FAD-binding FR-type domain. FAD contacts are provided by residues T324, L358, 392 to 395 (RLYS), 410 to 412 (TVA), and 425 to 428 (GGAS). NADP(+) is bound by residues 524–525 (SR), 530–534 (KIYVQ), and D566. Position 604 (Y604) interacts with FAD.

The protein belongs to the NADPH-dependent sulphite reductase flavoprotein subunit CysJ family. In the N-terminal section; belongs to the flavodoxin family. It in the C-terminal section; belongs to the flavoprotein pyridine nucleotide cytochrome reductase family. Alpha(8)-beta(8). The alpha component is a flavoprotein, the beta component is a hemoprotein. It depends on FAD as a cofactor. The cofactor is FMN.

It carries out the reaction hydrogen sulfide + 3 NADP(+) + 3 H2O = sulfite + 3 NADPH + 4 H(+). Its pathway is sulfur metabolism; hydrogen sulfide biosynthesis; hydrogen sulfide from sulfite (NADPH route): step 1/1. Component of the sulfite reductase complex that catalyzes the 6-electron reduction of sulfite to sulfide. This is one of several activities required for the biosynthesis of L-cysteine from sulfate. The flavoprotein component catalyzes the electron flow from NADPH -&gt; FAD -&gt; FMN to the hemoprotein component. The polypeptide is Sulfite reductase [NADPH] flavoprotein alpha-component (Shewanella sp. (strain ANA-3)).